The following is a 506-amino-acid chain: ATP synthase subunit alpha (506 aa).

An ATP-binding site is contributed by 171 to 178 (GDRKTGKT).

The protein belongs to the ATPase alpha/beta chains family. F-type ATPases have 2 components, CF(1) - the catalytic core - and CF(0) - the membrane proton channel. CF(1) has five subunits: alpha(3), beta(3), gamma(1), delta(1), epsilon(1). CF(0) has three main subunits: a(1), b(2) and c(9-12). The alpha and beta chains form an alternating ring which encloses part of the gamma chain. CF(1) is attached to CF(0) by a central stalk formed by the gamma and epsilon chains, while a peripheral stalk is formed by the delta and b chains.

The protein resides in the cell inner membrane. It catalyses the reaction ATP + H2O + 4 H(+)(in) = ADP + phosphate + 5 H(+)(out). In terms of biological role, produces ATP from ADP in the presence of a proton gradient across the membrane. The alpha chain is a regulatory subunit. In Anaplasma phagocytophilum (strain HZ), this protein is ATP synthase subunit alpha.